The following is a 939-amino-acid chain: Vacuolar membrane protease (939 aa).

The Cytoplasmic portion of the chain corresponds to 1 to 11; sequence MGFNSIFKFRK. The chain crosses the membrane as a helical span at residues 12–32; it reads TSLSLLLFAVYFIIGILYFID. The Vacuolar segment spans residues 33–356; the sequence is KTRYKHSLPI…TFVAIPSTKL (324 aa). N-linked (GlcNAc...) asparagine glycans are attached at residues Asn59, Asn88, and Asn114. 2 residues coordinate Zn(2+): His149 and Asp161. The active-site Proton acceptor is Glu193. Glu194, Glu219, and His293 together coordinate Zn(2+). N-linked (GlcNAc...) asparagine glycosylation is present at Asn326. A helical transmembrane segment spans residues 357–377; the sequence is FWINIALLIIMPIISIFLFSI. At 378 to 388 the chain is on the cytoplasmic side; it reads VKKYNNEIIDS. A helical transmembrane segment spans residues 389–409; sequence GNIWWRLPISAMSSGTIIIFT. Over 410–424 the chain is Vacuolar; it reads TKLIMKWNPYILSRN. Residues 425 to 445 traverse the membrane as a helical segment; that stretch reads FLLPLIGLTFEFIILNSYILT. Residues 446-453 lie on the Cytoplasmic side of the membrane; that stretch reads MFENLSSS. Residues 454 to 474 form a helical membrane-spanning segment; that stretch reads FDFKTIAINEISFLFWIVLAY. Over 475 to 491 the chain is Vacuolar; the sequence is QTWKLYDNNYQNTGIYP. The helical transmembrane segment at 492–512 threads the bilayer; the sequence is FTICYIVMATAGNIGYLFLIF. At 513 to 588 the chain is on the cytoplasmic side; sequence KNIEIVEDEE…NQRTILKESK (76 aa). Residues 540–552 show a composition bias toward basic and acidic residues; that stretch reads YRDEINGRDDSSR. The tract at residues 540–561 is disordered; sequence YRDEINGRDDSSRDSNSASIPT. Residues 589–609 form a helical membrane-spanning segment; it reads LVYNYDWIIEFLLVVPFSTFL. Residues 610–636 are Vacuolar-facing; it reads LYNSLELIMDAVNQTIQETGDLYKVYK. An N-linked (GlcNAc...) asparagine glycan is attached at Asn622. Residues 637-657 form a helical membrane-spanning segment; sequence ILAIGSILISIPTLPFAYKIG. The Cytoplasmic segment spans residues 658–663; sequence CQLGKT. Residues 664–684 form a helical membrane-spanning segment; that stretch reads LTFISIGCLLISMALAPFTEM. Residues 685–939 are Vacuolar-facing; that stretch reads NPIKFRFMQV…LVKLTEAMVL (255 aa). 2 N-linked (GlcNAc...) asparagine glycosylation sites follow: Asn810 and Asn820.

This sequence belongs to the peptidase M28 family. The cofactor is Zn(2+).

The protein resides in the vacuole membrane. In terms of biological role, may be involved in vacuolar sorting and osmoregulation. The polypeptide is Vacuolar membrane protease (Vanderwaltozyma polyspora (strain ATCC 22028 / DSM 70294 / BCRC 21397 / CBS 2163 / NBRC 10782 / NRRL Y-8283 / UCD 57-17) (Kluyveromyces polysporus)).